The primary structure comprises 216 residues: Octanoyltransferase (216 aa).

In terms of domain architecture, BPL/LPL catalytic spans 32–211; that stretch reads QEASEMLWFL…RFPYFLEALQ (180 aa). Residues 71-78, 142-144, and 155-157 each bind substrate; these read RGGRYTYH, AIG, and GFS. Cys173 (acyl-thioester intermediate) is an active-site residue.

The protein belongs to the LipB family.

It localises to the cytoplasm. The enzyme catalyses octanoyl-[ACP] + L-lysyl-[protein] = N(6)-octanoyl-L-lysyl-[protein] + holo-[ACP] + H(+). It functions in the pathway protein modification; protein lipoylation via endogenous pathway; protein N(6)-(lipoyl)lysine from octanoyl-[acyl-carrier-protein]: step 1/2. Functionally, catalyzes the transfer of endogenously produced octanoic acid from octanoyl-acyl-carrier-protein onto the lipoyl domains of lipoate-dependent enzymes. Lipoyl-ACP can also act as a substrate although octanoyl-ACP is likely to be the physiological substrate. The chain is Octanoyltransferase from Zymomonas mobilis subsp. mobilis (strain ATCC 31821 / ZM4 / CP4).